The chain runs to 414 residues: MKGPIKFNALSLQGRSVMSNQSNDTTITQRRDTMNELTEEQKLLMEMVRNLAVREIAPRAIEIDENHSFPVHARDLFADLGLLSPLVPVEYGGTGMDITTFAMVLEEIGKVCASTALMLLAQADGMLSIILDGSPALKEKYLPRFGEKSTLMTAFAATEPGAGSDLLAMKTRAVKKGDKYVINGQKCFITNGSVADILTVWAYTDPSKGAKGMSTFVVERGTPGLIYGHNEKKMGMRGCPNSELFFEDLEVPAENLVGEEGKGFAYLMGALSINRVFCASQAVGIAQGALERAMQHTREREQFGKPIAHLTPIQFMIADMATEVEAARLLVRKATTLLDAKDKRGPLIGGMAKTFASDTAMKVTTDAVQVMGGSGYMQEYQVERMMREAKLTQIYTGTNQITRMVTGRSLLFPS.

Asp-124 serves as the catalytic Proton acceptor. Ala-157, Thr-158, Ser-164, and Thr-190 together coordinate FAD. Cyclohex-1-ene-1-carbonyl-CoA is bound at residue Ser-164. Ser-164 provides a ligand contact to cyclohexa-1,5-diene-1-carbonyl-CoA. Lys-211, Arg-275, and Thr-396 together coordinate cyclohex-1-ene-1-carbonyl-CoA. Positions 211, 275, and 396 each coordinate cyclohexa-1,5-diene-1-carbonyl-CoA. FAD contacts are provided by Thr-398 and Gln-400. Residue Arg-408 participates in cyclohex-1-ene-1-carbonyl-CoA binding. Residue Arg-408 coordinates cyclohexa-1,5-diene-1-carbonyl-CoA.

Belongs to the acyl-CoA dehydrogenase family. In terms of assembly, homotetramer. The cofactor is FAD.

It carries out the reaction cyclohex-1-ene-1-carbonyl-CoA + oxidized [electron-transfer flavoprotein] + H(+) = cyclohexa-1,5-diene-1-carbonyl-CoA + reduced [electron-transfer flavoprotein]. In terms of biological role, mediates the conversion of cyclohex-1-ene-1-carbonyl-CoA (Ch1CoA) into (E)-2-cyclohex-1,5-diene-1-carbonyl-CoA in biosynthesis of cyclohexane-1-carboxylate, a by-product produced during fermentation of benzoate and crotonate to acetate. Also able to further convert (E)-2-cyclohex-1,5-diene-1-carbonyl-CoA to benzoyl-CoA. The protein is Cyclohex-1-ene-1-carbonyl-CoA dehydrogenase of Syntrophus aciditrophicus (strain SB).